A 292-amino-acid chain; its full sequence is Elongation factor Ts (292 aa).

The tract at residues 79–82 is involved in Mg(2+) ion dislocation from EF-Tu; that stretch reads TDFV.

This sequence belongs to the EF-Ts family.

Its subcellular location is the cytoplasm. In terms of biological role, associates with the EF-Tu.GDP complex and induces the exchange of GDP to GTP. It remains bound to the aminoacyl-tRNA.EF-Tu.GTP complex up to the GTP hydrolysis stage on the ribosome. This Staphylococcus epidermidis (strain ATCC 12228 / FDA PCI 1200) protein is Elongation factor Ts.